Reading from the N-terminus, the 694-residue chain is Nucleolin (694 aa).

Positions 1–277 are disordered; it reads MVKLAKTPKN…EAKKKKTETP (277 aa). The segment covering 26 to 40 has biased composition (acidic residues); sequence ESEEEESSDLEESSG. Over residues 46–108 the composition is skewed to low complexity; the sequence is PPKKQQKAAV…AVVGKGAKNG (63 aa). Repeat copies occupy residues 55–61, 62–68, 69–75, 76–82, and 84–90. The interval 55 to 90 is 5 X 7 AA tandem repeats of X-T-P-X-K-K-X; that stretch reads VTPAKKAATPAKKAATPAKKAVTPAKKAVATPAKKA. Ser116 and Ser136 each carry phosphoserine. The segment covering 116–142 has biased composition (acidic residues); it reads SEEEDEDDEDDEEDEDEEEESDEEEEP. Residues 143-168 show a composition bias toward low complexity; it reads AVPVKPAAKKSAAAVPAKKPAVVPAK. Ser171 carries the phosphoserine modification. Positions 171-194 are enriched in acidic residues; that stretch reads SEEEEEEDDEEEDEEDDESEDEAM. Low complexity predominate over residues 196–213; sequence TTPAPVKKPTPAKATPAK. Positions 218-246 are enriched in acidic residues; sequence SEDEEDEEDEDEDEEDEDDEEEDEEESED. RRM domains lie at 281–357, 371–445, 461–535, and 553–628; these read FSLF…KAKS, RTLF…YTGE, KTLI…FSSP, and KTLF…FAKP. The interval 631 to 694 is disordered; it reads EFQRGGGFGG…KPQGKKIKFE (64 aa). A compositionally biased stretch (gly residues) spans 633-680; it reads QRGGGFGGGFGGRGGRGGRGGGRGGFGGRGGGRGFGGRGGGFRGGRGG. The span at 681–694 shows a compositional bias: basic and acidic residues; that stretch reads GGDHKPQGKKIKFE.

Post-translationally, highly phosphorylated during mitosis.

The protein localises to the nucleus. The protein resides in the nucleolus. In terms of biological role, nucleolin is the major nucleolar protein of growing eukaryotic cells. It is found associated with intranucleolar chromatin and pre-ribosomal particles. It induces chromatin decondensation by binding to histone H1. It is thought to play a role in pre-rRNA transcription and ribosome assembly. The chain is Nucleolin (NCL) from Gallus gallus (Chicken).